We begin with the raw amino-acid sequence, 291 residues long: Pituitary-specific positive transcription factor 1 (291 aa).

The 9aaTAD motif lies at 5–13 (PFTSTDTFI). One can recognise a POU-specific domain in the interval 124-198 (MDSPEIRELE…ILSKWLEEAE (75 aa)). The homeobox DNA-binding region spans 214–273 (KRKRRTTISIAAKDALERHFGEQNKPSSQEILRMAEELNLEKEVVRVWFCNRRQREKRVK).

The protein belongs to the POU transcription factor family. Class-1 subfamily. Interacts with PITX1. Interacts with LHX3. Interacts with ELK1.

Its subcellular location is the nucleus. Functionally, transcription factor involved in the specification of the lactotrope, somatotrope, and thyrotrope phenotypes in the developing anterior pituitary. Activates growth hormone and prolactin genes. Specifically binds to the consensus sequence 5'-TAAAT-3'. The chain is Pituitary-specific positive transcription factor 1 (POU1F1) from Bos taurus (Bovine).